A 143-amino-acid chain; its full sequence is Hemoglobin subunit alpha-2 (143 aa).

Serine 2 carries the N-acetylserine modification. The region spanning serine 2–arginine 143 is the Globin domain. An O2-binding site is contributed by histidine 60. Histidine 89 provides a ligand contact to heme b.

It belongs to the globin family. Hb 2 is a heterotetramer of two alpha-2 and two beta-1 chains. Hb 3 is a heterotetramer of two alpha-2 and two beta-2 chains. Red blood cells.

In terms of biological role, involved in oxygen transport from gills to the various peripheral tissues. The protein is Hemoglobin subunit alpha-2 (hba2) of Arctogadus glacialis (Arctic cod).